Here is a 349-residue protein sequence, read N- to C-terminus: Hypoxia-inducible factor 1-alpha inhibitor (349 aa).

Residues Met-1 to Gly-14 show a composition bias toward low complexity. Positions Met-1–Arg-51 are disordered. At Ala-2 the chain carries N-acetylalanine. Positions Ala-2–Phe-125 are interaction with VHL. The JmjC domain occupies Glu-142–Glu-307. Tyr-145 serves as a coordination point for 2-oxoglutarate. Substrate is bound by residues Asp-152 and Gln-181–Thr-183. 2-oxoglutarate is bound at residue Thr-196. Residues His-199 and Asp-201 each contribute to the Fe cation site. Residue Asp-201–Gln-203 participates in substrate binding. Positions 205 and 214 each coordinate 2-oxoglutarate. Arg-238–Gln-239 provides a ligand contact to substrate. His-279 contributes to the Fe cation binding site. Asn-294 serves as a coordination point for 2-oxoglutarate. Residues Ala-300 and Asn-321 each coordinate substrate.

Homodimer; homodimerization is essential for catalytic activity. Interacts with VHL and HIF1A. Part of a complex with VHL, HIF1A and HDAC1 or HDAC2 or HDAC3. Interacts with NFKB1 and NFKBIA. Interacts with NOTCH1, NOTCH2 and NOTCH3 but not with NOTCH4. Interacts with ABPA3. Interacts with TNKS2. Interacts with PPP1R12A. Interacts with UBE3A. Interacts with ASB4. Interacts with ANKS3. Interacts with NECAB3; the interaction is indirect and seems to be mediated by APBA3. Requires Fe(2+) as cofactor.

Its subcellular location is the nucleus. The protein resides in the cytoplasm. It is found in the perinuclear region. It carries out the reaction L-asparaginyl-[hypoxia-inducible factor alpha subunit] + 2-oxoglutarate + O2 = (3S)-3-hydroxy-L-asparaginyl-[hypoxia-inducible factor alpha subunit] + succinate + CO2. The catalysed reaction is L-histidyl-[ankyrin-repeat domain protein] + 2-oxoglutarate + O2 = (3S)-3-hydroxy-L-histidyl-[ankyrin-repeat domain protein] + succinate + CO2. It catalyses the reaction L-asparaginyl-[ankyrin-repeat domain protein] + 2-oxoglutarate + O2 = (3S)-3-hydroxy-L-asparaginyl-[ankyrin-repeat domain protein] + succinate + CO2. The enzyme catalyses L-aspartyl-[ankyrin-repeat domain protein] + 2-oxoglutarate + O2 = (3S)-3-hydroxy-L-aspartyl-[ankyrin-repeat domain protein] + succinate + CO2. Its function is as follows. Hydroxylates HIF-1 alpha at 'Asn-799' in the C-terminal transactivation domain (CAD). Functions as an oxygen sensor and, under normoxic conditions, the hydroxylation prevents interaction of HIF-1 with transcriptional coactivators including Cbp/p300-interacting transactivator. Involved in transcriptional repression through interaction with HIF1A, VHL and histone deacetylases. Hydroxylates specific Asn residues within ankyrin repeat domains (ARD) of NFKB1, NFKBIA, NOTCH1, ASB4, PPP1R12A and several other ARD-containing proteins. Also hydroxylates Asp and His residues within ARDs of ANK1 and TNKS2, respectively. Negatively regulates NOTCH1 activity, accelerating myogenic differentiation. Positively regulates ASB4 activity, promoting vascular differentiation. The protein is Hypoxia-inducible factor 1-alpha inhibitor (Hif1an) of Mus musculus (Mouse).